The primary structure comprises 314 residues: tRNA dimethylallyltransferase (314 aa).

Residue 11 to 18 (GPTGSGKT) coordinates ATP. 13–18 (TGSGKT) is a binding site for substrate. Positions 36 to 39 (DSMQ) are interaction with substrate tRNA.

This sequence belongs to the IPP transferase family. In terms of assembly, monomer. Mg(2+) is required as a cofactor.

The enzyme catalyses adenosine(37) in tRNA + dimethylallyl diphosphate = N(6)-dimethylallyladenosine(37) in tRNA + diphosphate. Catalyzes the transfer of a dimethylallyl group onto the adenine at position 37 in tRNAs that read codons beginning with uridine, leading to the formation of N6-(dimethylallyl)adenosine (i(6)A). The protein is tRNA dimethylallyltransferase of Chlamydia trachomatis serovar D (strain ATCC VR-885 / DSM 19411 / UW-3/Cx).